The following is a 156-amino-acid chain: UPF0587 protein (156 aa).

Residues C32, C35, C64, and C67 each coordinate Zn(2+).

Belongs to the UPF0587 family.

The polypeptide is UPF0587 protein (Dictyostelium discoideum (Social amoeba)).